The sequence spans 485 residues: Peroxisomal catalase (485 aa).

Active-site residues include H53 and N126. Y336 provides a ligand contact to heme.

The protein belongs to the catalase family. Homotetramer. Heme is required as a cofactor.

It is found in the peroxisome matrix. It catalyses the reaction 2 H2O2 = O2 + 2 H2O. Functionally, catalyzes the degradation of hydrogen peroxide (H(2)O(2)) generated by peroxisomal oxidases to water and oxygen, thereby protecting cells from the toxic effects of hydrogen peroxide. The protein is Peroxisomal catalase (CAT1) of Candida albicans (strain SC5314 / ATCC MYA-2876) (Yeast).